A 424-amino-acid polypeptide reads, in one-letter code: Serine--tRNA ligase (424 aa).

232–234 is an L-serine binding site; it reads TAE. 263 to 265 contacts ATP; that stretch reads RSE. Residue Glu-286 coordinates L-serine. 350–353 contacts ATP; the sequence is EISS. Ser-385 contacts L-serine.

Belongs to the class-II aminoacyl-tRNA synthetase family. Type-1 seryl-tRNA synthetase subfamily. In terms of assembly, homodimer. The tRNA molecule binds across the dimer.

Its subcellular location is the cytoplasm. It catalyses the reaction tRNA(Ser) + L-serine + ATP = L-seryl-tRNA(Ser) + AMP + diphosphate + H(+). The catalysed reaction is tRNA(Sec) + L-serine + ATP = L-seryl-tRNA(Sec) + AMP + diphosphate + H(+). It functions in the pathway aminoacyl-tRNA biosynthesis; selenocysteinyl-tRNA(Sec) biosynthesis; L-seryl-tRNA(Sec) from L-serine and tRNA(Sec): step 1/1. Catalyzes the attachment of serine to tRNA(Ser). Is also able to aminoacylate tRNA(Sec) with serine, to form the misacylated tRNA L-seryl-tRNA(Sec), which will be further converted into selenocysteinyl-tRNA(Sec). In Latilactobacillus sakei subsp. sakei (strain 23K) (Lactobacillus sakei subsp. sakei), this protein is Serine--tRNA ligase.